The sequence spans 353 residues: ATP-dependent (S)-NAD(P)H-hydrate dehydratase (353 aa).

The YjeF C-terminal domain occupies 18–345 (MLARVRQMVP…DEVHTAFLNL (328 aa)). The tract at residues 95 to 121 (RSSPPALSSSDSGSSPSRTKSAPDTDP) is disordered. A compositionally biased stretch (low complexity) spans 96–114 (SSPPALSSSDSGSSPSRTK). (6S)-NADPHX is bound by residues Gly143 and 196–202 (NVVEFGR). Residues 241–245 (KGAKD) and 260–269 (GGLKRSGGQG) each bind ATP. Asp270 is a binding site for (6S)-NADPHX.

Belongs to the NnrD/CARKD family. It depends on Mg(2+) as a cofactor.

The protein resides in the cytoplasm. The enzyme catalyses (6S)-NADHX + ATP = ADP + phosphate + NADH + H(+). It carries out the reaction (6S)-NADPHX + ATP = ADP + phosphate + NADPH + H(+). Functionally, catalyzes the dehydration of the S-form of NAD(P)HX at the expense of ATP, which is converted to ADP. Together with NAD(P)HX epimerase, which catalyzes the epimerization of the S- and R-forms, the enzyme allows the repair of both epimers of NAD(P)HX, a damaged form of NAD(P)H that is a result of enzymatic or heat-dependent hydration. The polypeptide is ATP-dependent (S)-NAD(P)H-hydrate dehydratase (Neurospora crassa (strain ATCC 24698 / 74-OR23-1A / CBS 708.71 / DSM 1257 / FGSC 987)).